The chain runs to 51 residues: Insulin (51 aa).

3 disulfides stabilise this stretch: C7-C37, C19-C50, and C36-C41.

It belongs to the insulin family. In terms of assembly, heterodimer of a B chain and an A chain linked by two disulfide bonds.

It is found in the secreted. Its function is as follows. Insulin decreases blood glucose concentration. It increases cell permeability to monosaccharides, amino acids and fatty acids. It accelerates glycolysis, the pentose phosphate cycle, and glycogen synthesis in liver. This Alligator mississippiensis (American alligator) protein is Insulin (INS).